A 147-amino-acid polypeptide reads, in one-letter code: Hemoglobin anodic subunit beta (147 aa).

The Globin domain maps to 2–147 (EWTEDERTAI…VTSALARQYH (146 aa)). Positions 63 and 92 each coordinate heme b.

It belongs to the globin family. As to quaternary structure, heterotetramer of two alpha chains and two beta chains. As to expression, red blood cells.

Functionally, involved in oxygen transport from gills to the various peripheral tissues. The chain is Hemoglobin anodic subunit beta (hbb1) from Anguilla anguilla (European freshwater eel).